The following is a 407-amino-acid chain: Bifunctional enzyme IspD/IspF (407 aa).

Residues 1-246 form a 2-C-methyl-D-erythritol 4-phosphate cytidylyltransferase region; it reads MQPLAEATTI…RQDHVSFPDI (246 aa). The tract at residues 247–407 is 2-C-methyl-D-erythritol 2,4-cyclodiphosphate synthase; that stretch reads RTGNGYDVHS…TVIYPGEVPE (161 aa). Asp-253 and His-255 together coordinate a divalent metal cation. Residues 253-255 and 279-280 each bind 4-CDP-2-C-methyl-D-erythritol 2-phosphate; these read DVH and HS. His-287 contributes to the a divalent metal cation binding site. Residues 301–303, 377–380, Phe-384, and Arg-387 contribute to the 4-CDP-2-C-methyl-D-erythritol 2-phosphate site; these read DIG and TTNE.

The protein in the N-terminal section; belongs to the IspD/TarI cytidylyltransferase family. IspD subfamily. In the C-terminal section; belongs to the IspF family. The cofactor is a divalent metal cation.

The enzyme catalyses 2-C-methyl-D-erythritol 4-phosphate + CTP + H(+) = 4-CDP-2-C-methyl-D-erythritol + diphosphate. The catalysed reaction is 4-CDP-2-C-methyl-D-erythritol 2-phosphate = 2-C-methyl-D-erythritol 2,4-cyclic diphosphate + CMP. It functions in the pathway isoprenoid biosynthesis; isopentenyl diphosphate biosynthesis via DXP pathway; isopentenyl diphosphate from 1-deoxy-D-xylulose 5-phosphate: step 2/6. The protein operates within isoprenoid biosynthesis; isopentenyl diphosphate biosynthesis via DXP pathway; isopentenyl diphosphate from 1-deoxy-D-xylulose 5-phosphate: step 4/6. In terms of biological role, bifunctional enzyme that catalyzes the formation of 4-diphosphocytidyl-2-C-methyl-D-erythritol from CTP and 2-C-methyl-D-erythritol 4-phosphate (MEP) (IspD), and catalyzes the conversion of 4-diphosphocytidyl-2-C-methyl-D-erythritol 2-phosphate (CDP-ME2P) to 2-C-methyl-D-erythritol 2,4-cyclodiphosphate (ME-CPP) with a corresponding release of cytidine 5-monophosphate (CMP) (IspF). In Brucella anthropi (strain ATCC 49188 / DSM 6882 / CCUG 24695 / JCM 21032 / LMG 3331 / NBRC 15819 / NCTC 12168 / Alc 37) (Ochrobactrum anthropi), this protein is Bifunctional enzyme IspD/IspF.